Consider the following 215-residue polypeptide: Large ribosomal subunit protein uL3 (215 aa).

Q153 bears the N5-methylglutamine mark.

The protein belongs to the universal ribosomal protein uL3 family. Part of the 50S ribosomal subunit. Forms a cluster with proteins L14 and L19. Post-translationally, methylated by PrmB.

Functionally, one of the primary rRNA binding proteins, it binds directly near the 3'-end of the 23S rRNA, where it nucleates assembly of the 50S subunit. The sequence is that of Large ribosomal subunit protein uL3 from Nitrosococcus oceani (strain ATCC 19707 / BCRC 17464 / JCM 30415 / NCIMB 11848 / C-107).